The following is a 362-amino-acid chain: 4-hydroxythreonine-4-phosphate dehydrogenase (362 aa).

T149 provides a ligand contact to substrate. Residues H184, H229, and H295 each coordinate a divalent metal cation. K303, N312, and R321 together coordinate substrate.

This sequence belongs to the PdxA family. As to quaternary structure, homodimer. A divalent metal cation is required as a cofactor.

It localises to the cytoplasm. The catalysed reaction is 4-(phosphooxy)-L-threonine + NAD(+) = 3-amino-2-oxopropyl phosphate + CO2 + NADH. It functions in the pathway cofactor biosynthesis; pyridoxine 5'-phosphate biosynthesis; pyridoxine 5'-phosphate from D-erythrose 4-phosphate: step 4/5. Catalyzes the NAD(P)-dependent oxidation of 4-(phosphooxy)-L-threonine (HTP) into 2-amino-3-oxo-4-(phosphooxy)butyric acid which spontaneously decarboxylates to form 3-amino-2-oxopropyl phosphate (AHAP). The protein is 4-hydroxythreonine-4-phosphate dehydrogenase of Nostoc sp. (strain PCC 7120 / SAG 25.82 / UTEX 2576).